Here is a 497-residue protein sequence, read N- to C-terminus: Homeotic protein empty spiracles (497 aa).

Disordered stretches follow at residues 34–117 (NDVS…HLSP), 161–262 (SPLQ…MMMP), and 441–497 (NRRT…DASH). Positions 35–50 (DVSTAGGNSTPDLSGP) are enriched in polar residues. Over residues 51–68 (QSPPPGERNVPGSPPQTP) the composition is skewed to pro residues. Low complexity predominate over residues 96–117 (PHAQQQQQQHLQAPHPHPHLSP). Polar residues predominate over residues 161–176 (SPLQTRLSPETEQPQM). Low complexity-rich tracts occupy residues 208 to 239 (PKSV…QQQQ) and 248 to 262 (PAMM…MMMP). The homeobox DNA-binding region spans 391–450 (PKRIRTAFSPSQLLKLEHAFESNQYVVGAERKALAQNLNLSETQVKVWFQNRRTKHKRMQ). The span at 470 to 497 (GDEDDDELIDMEMDECPSDEEHELDASH) shows a compositional bias: acidic residues.

This sequence belongs to the EMX homeobox family.

The protein resides in the nucleus. Its function is as follows. Acts as a homeotic selector gene controlling antennal and mandibular segment identity. The sequence is that of Homeotic protein empty spiracles (ems) from Drosophila melanogaster (Fruit fly).